Here is a 140-residue protein sequence, read N- to C-terminus: 3-hydroxyacyl-[acyl-carrier-protein] dehydratase FabZ (140 aa).

H47 is an active-site residue.

This sequence belongs to the thioester dehydratase family. FabZ subfamily.

It is found in the cytoplasm. It carries out the reaction a (3R)-hydroxyacyl-[ACP] = a (2E)-enoyl-[ACP] + H2O. Its function is as follows. Involved in unsaturated fatty acids biosynthesis. Catalyzes the dehydration of short chain beta-hydroxyacyl-ACPs and long chain saturated and unsaturated beta-hydroxyacyl-ACPs. The chain is 3-hydroxyacyl-[acyl-carrier-protein] dehydratase FabZ from Streptococcus equi subsp. equi (strain 4047).